The following is a 207-amino-acid chain: Octanoyltransferase (207 aa).

Residues A27–A203 form the BPL/LPL catalytic domain. Residues R66–H73, S133–G135, and G146–A148 contribute to the substrate site. C164 acts as the Acyl-thioester intermediate in catalysis.

It belongs to the LipB family.

The protein localises to the cytoplasm. The catalysed reaction is octanoyl-[ACP] + L-lysyl-[protein] = N(6)-octanoyl-L-lysyl-[protein] + holo-[ACP] + H(+). It participates in protein modification; protein lipoylation via endogenous pathway; protein N(6)-(lipoyl)lysine from octanoyl-[acyl-carrier-protein]: step 1/2. In terms of biological role, catalyzes the transfer of endogenously produced octanoic acid from octanoyl-acyl-carrier-protein onto the lipoyl domains of lipoate-dependent enzymes. Lipoyl-ACP can also act as a substrate although octanoyl-ACP is likely to be the physiological substrate. This is Octanoyltransferase from Neisseria meningitidis serogroup C / serotype 2a (strain ATCC 700532 / DSM 15464 / FAM18).